Reading from the N-terminus, the 935-residue chain is GPI ethanolamine phosphate transferase 1 (935 aa).

Residues 1-5 (MFGRL) lie on the Cytoplasmic side of the membrane. A helical transmembrane segment spans residues 6 to 26 (LLLGILFHVVFLKSIFDIYFV). The Lumenal segment spans residues 27 to 449 (TPLIHGMKQY…LQRYDWLLLR (423 aa)). N-linked (GlcNAc...) asparagine glycans are attached at residues Asn-86, Asn-134, Asn-315, and Asn-398. The helical transmembrane segment at 450–470 (SIVFFGYLSWIGYVICFVFSL) threads the bilayer. The Cytoplasmic portion of the chain corresponds to 471-483 (NIEPSSKIVKPVS). Residues 484-503 (VVKRVAFNIPFLLICIFFYI) traverse the membrane as a helical segment. Topologically, residues 504–509 (QSSPPF) are lumenal. The helical transmembrane segment at 510–530 (YYGYALFPTIFLQLIHSIFPN) threads the bilayer. Residues 531–547 (TKLGFKNFLTVAKQKHG) are Cytoplasmic-facing. Residues 548–568 (FSLLKILFISLCILCLLQFIV) form a helical membrane-spanning segment. Residues 569 to 576 (YSYFHREG) are Lumenal-facing. A helical transmembrane segment spans residues 577–597 (FSVILMGLAAWPWLLHADYAF). Residues 598–600 (SHK) are Cytoplasmic-facing. The helical transmembrane segment at 601-621 (TISVSWSVLTSLLCFFTILPV) threads the bilayer. The Lumenal portion of the chain corresponds to 622 to 626 (NKKES). Residues 627-647 (LLFIFAGGFAMSVAGVFYILY) form a helical membrane-spanning segment. The Cytoplasmic segment spans residues 648–663 (RRNQAFQYSSTVTNKQ). Residues 664 to 684 (LVLQVLIIMATVPVTLKIADS) form a helical membrane-spanning segment. At 685–688 (LQRN) the chain is on the lumenal side. The helical transmembrane segment at 689–709 (IAIPPILRLVAFGLFITSYII) threads the bilayer. Topologically, residues 710–737 (PSHHIRSCKHYFLDRLAILFLTFSPTMC) are cytoplasmic. The chain crosses the membrane as a helical span at residues 738–758 (MLSISFEALFYVVLFITLGLW). Residues 759–792 (MELETELQKYTEQLHPEYSRKKDAKFHLSLSHIR) are Lumenal-facing. A helical transmembrane segment spans residues 793-813 (ISLFFYIFINVAFFGTGNVAS). Residues 814–835 (LSTFALDSVKRFIPVFNPVTQG) lie on the Cytoplasmic side of the membrane. A helical membrane pass occupies residues 836–856 (ALLMYTILVPFIALSAAFGIM). Topologically, residues 857–865 (NKRLGGIQQ) are lumenal. A helical membrane pass occupies residues 866–886 (VTFFLAVGMADIVTINFFYLV). The Cytoplasmic segment spans residues 887–894 (KDEGSWKD). A helical transmembrane segment spans residues 895-915 (IGVSISHFCISNFLILFITAL). Over 916–935 (EHASAILCKNITYTIHEKVN) the chain is Lumenal. N-linked (GlcNAc...) asparagine glycosylation occurs at Asn-925.

It belongs to the PIGG/PIGN/PIGO family. PIGN subfamily.

The protein resides in the endoplasmic reticulum membrane. The protein operates within glycolipid biosynthesis; glycosylphosphatidylinositol-anchor biosynthesis. Functionally, ethanolamine phosphate transferase involved in glycosylphosphatidylinositol-anchor biosynthesis. Transfers ethanolamine phosphate to the first alpha-1,4-linked mannose of the glycosylphosphatidylinositol precursor of GPI-anchor. This Schizosaccharomyces pombe (strain 972 / ATCC 24843) (Fission yeast) protein is GPI ethanolamine phosphate transferase 1 (its8).